The primary structure comprises 401 residues: Calreticulin (401 aa).

The N-terminal stretch at 1 to 18 (MRKELWLGLLLSSQAVLS) is a signal peptide. Residues Cys-103 and Cys-134 are joined by a disulfide bond. The an alpha-D-glucoside site is built by Tyr-107, Lys-109, Tyr-125, and Asp-132. Repeat copies occupy residues 187 to 198 (KESGTLEEDWEI), 206 to 217 (DPEDKKPADWVD), 223 to 234 (DPEDKKPEDWDK), 241 to 252 (DPDATQPDDWDE), 256 to 266 (GKWEAPMISNP), 270 to 280 (GEWKAKKIPNP), and 284 to 294 (GVWKPRDIPNP). The interval 187 to 252 (KESGTLEEDW…DATQPDDWDE (66 aa)) is 4 X approximate repeats. Composition is skewed to basic and acidic residues over residues 199 to 214 (LKPK…KPAD) and 224 to 236 (PEDK…DKEP). Positions 199 to 263 (LKPKTIPDPE…EDGKWEAPMI (65 aa)) are disordered. Residues 246-256 (QPDDWDEEEDG) show a composition bias toward acidic residues. Residues 256 to 294 (GKWEAPMISNPKYKGEWKAKKIPNPAYKGVWKPRDIPNP) are 3 X approximate repeats. Asp-314 is a binding site for an alpha-D-glucoside. Positions 341 to 401 (DQTNGATKDA…EEEDDKKDEL (61 aa)) are disordered. Positions 348–381 (KDAEKKAFDSAEADKRKKEEDERKKQEEEEKKTA) are enriched in basic and acidic residues. The span at 382–401 (EEDEDDDDEEEEEDDKKDEL) shows a compositional bias: acidic residues. The short motif at 398-401 (KDEL) is the Prevents secretion from ER element.

The protein belongs to the calreticulin family.

The protein localises to the endoplasmic reticulum lumen. Molecular calcium-binding chaperone promoting folding, oligomeric assembly and quality control in the ER via the calreticulin/calnexin cycle. This lectin may interact transiently with almost all of the monoglucosylated glycoproteins that are synthesized in the ER. The protein is Calreticulin of Euglena gracilis.